Here is a 105-residue protein sequence, read N- to C-terminus: Photosystem II 5 kDa protein, chloroplastic (105 aa).

The N-terminal 77 residues, Met-1 to Ala-77, are a transit peptide targeting the chloroplast.

Post-translationally, the maturation of the PSII-T precursor to its final form occurs through a two step process. First, a stromal intermediate is formed, which, upon translocation into the thylakoid membrane, is processed to the mature protein.

The protein resides in the plastid. The protein localises to the chloroplast thylakoid membrane. Functionally, may be a component of the oxygen-evolving complex. The protein is Photosystem II 5 kDa protein, chloroplastic (PSBT) of Gossypium hirsutum (Upland cotton).